The sequence spans 54 residues: Lectin alpha chain (54 aa).

This sequence belongs to the leguminous lectin family. Tetramer of two alpha and two beta chains.

In Lathyrus tingitanus (Tangier pea), this protein is Lectin alpha chain.